The chain runs to 782 residues: uncharacterized protein (782 aa).

Disordered regions lie at residues 1-25 and 175-195; these read MFSPSKFRKQVNESESVSNCESTTS and RPRTSPYKRAGDASMSREDLR. Residues 13 to 25 show a composition bias toward low complexity; sequence ESESVSNCESTTS. Positions 183–195 are enriched in basic and acidic residues; it reads RAGDASMSREDLR. 4 coiled-coil regions span residues 223 to 331, 348 to 398, 428 to 601, and 699 to 743; these read RENR…STLN, LSQF…VSTL, NRIN…QLLN, and TIET…IIAK. Residues 748 to 782 are disordered; that stretch reads NIPKTEKSSPMKKVPPIENFRAKSQTSITGLSPVL. A compositionally biased stretch (polar residues) spans 769-782; it reads AKSQTSITGLSPVL.

This is an uncharacterized protein from Caenorhabditis elegans.